Here is a 180-residue protein sequence, read N- to C-terminus: ATP-dependent protease subunit HslV (180 aa).

The active site involves Thr7. Positions 163, 166, and 169 each coordinate Na(+).

It belongs to the peptidase T1B family. HslV subfamily. As to quaternary structure, a double ring-shaped homohexamer of HslV is capped on each side by a ring-shaped HslU homohexamer. The assembly of the HslU/HslV complex is dependent on binding of ATP.

The protein localises to the cytoplasm. The catalysed reaction is ATP-dependent cleavage of peptide bonds with broad specificity.. Its activity is regulated as follows. Allosterically activated by HslU binding. Protease subunit of a proteasome-like degradation complex believed to be a general protein degrading machinery. The protein is ATP-dependent protease subunit HslV of Cytophaga hutchinsonii (strain ATCC 33406 / DSM 1761 / CIP 103989 / NBRC 15051 / NCIMB 9469 / D465).